Reading from the N-terminus, the 78-residue chain is Small ribosomal subunit protein bS16c (78 aa).

This sequence belongs to the bacterial ribosomal protein bS16 family.

It localises to the plastid. It is found in the chloroplast. In Phaeodactylum tricornutum (strain CCAP 1055/1), this protein is Small ribosomal subunit protein bS16c.